A 138-amino-acid polypeptide reads, in one-letter code: Nucleoside diphosphate kinase (138 aa).

Residues Lys12, Tyr60, Arg88, Thr94, Arg105, and Asn115 each contribute to the ATP site. His118 (pros-phosphohistidine intermediate) is an active-site residue.

Belongs to the NDK family. As to quaternary structure, homotetramer. Requires Mg(2+) as cofactor.

It localises to the cytoplasm. It catalyses the reaction a 2'-deoxyribonucleoside 5'-diphosphate + ATP = a 2'-deoxyribonucleoside 5'-triphosphate + ADP. It carries out the reaction a ribonucleoside 5'-diphosphate + ATP = a ribonucleoside 5'-triphosphate + ADP. Major role in the synthesis of nucleoside triphosphates other than ATP. The ATP gamma phosphate is transferred to the NDP beta phosphate via a ping-pong mechanism, using a phosphorylated active-site intermediate. The protein is Nucleoside diphosphate kinase of Cutibacterium acnes (strain DSM 16379 / KPA171202) (Propionibacterium acnes).